The chain runs to 204 residues: Large ribosomal subunit protein uL22m (204 aa).

A mitochondrion-targeting transit peptide spans 1 to 27 (MAASITASVWGTLLKIHRGLTASGCLP).

Belongs to the universal ribosomal protein uL22 family. In terms of assembly, component of the mitochondrial ribosome large subunit (39S) which comprises a 16S rRNA and about 50 distinct proteins.

Its subcellular location is the mitochondrion. This Xenopus tropicalis (Western clawed frog) protein is Large ribosomal subunit protein uL22m (mrpl22).